Reading from the N-terminus, the 431-residue chain is Adenylosuccinate synthetase (431 aa).

GTP is bound by residues 12–18 and 40–42; these read GDEGKGK and GHT. The active-site Proton acceptor is Asp-13. Residues Asp-13 and Gly-40 each coordinate Mg(2+). IMP is bound by residues 13 to 16, 38 to 41, Thr-130, Arg-144, Gln-224, Thr-239, and Arg-303; these read DEGK and NAGH. His-41 serves as the catalytic Proton donor. Residue 299–305 participates in substrate binding; sequence STTGRPR. GTP contacts are provided by residues Arg-305, 331–333, and 413–415; these read KAD and SIG.

It belongs to the adenylosuccinate synthetase family. Homodimer. Mg(2+) serves as cofactor.

It is found in the cytoplasm. It catalyses the reaction IMP + L-aspartate + GTP = N(6)-(1,2-dicarboxyethyl)-AMP + GDP + phosphate + 2 H(+). It functions in the pathway purine metabolism; AMP biosynthesis via de novo pathway; AMP from IMP: step 1/2. Its function is as follows. Plays an important role in the de novo pathway of purine nucleotide biosynthesis. Catalyzes the first committed step in the biosynthesis of AMP from IMP. The polypeptide is Adenylosuccinate synthetase (Cytophaga hutchinsonii (strain ATCC 33406 / DSM 1761 / CIP 103989 / NBRC 15051 / NCIMB 9469 / D465)).